Here is a 648-residue protein sequence, read N- to C-terminus: Exoribonuclease 2 (648 aa).

An RNB domain is found at Arg-191–Ile-518. An S1 motif domain is found at Lys-565–Ile-647.

It belongs to the RNR ribonuclease family. RNase II subfamily.

The protein resides in the cytoplasm. It catalyses the reaction Exonucleolytic cleavage in the 3'- to 5'-direction to yield nucleoside 5'-phosphates.. Its function is as follows. Involved in mRNA degradation. Hydrolyzes single-stranded polyribonucleotides processively in the 3' to 5' direction. The protein is Exoribonuclease 2 of Buchnera aphidicola subsp. Cinara cedri (strain Cc).